Consider the following 254-residue polypeptide: Urease accessory protein UreF (254 aa).

Positions 1–11 (MDKGKSVKSTE) are enriched in basic and acidic residues. A disordered region spans residues 1-26 (MDKGKSVKSTEKSVGMPPKTPKTDNN).

Belongs to the UreF family. In terms of assembly, ureH, UreF and UreG form a complex that acts as a GTP-hydrolysis-dependent molecular chaperone, activating the urease apoprotein by helping to assemble the nickel containing metallocenter of UreC. The UreE protein probably delivers the nickel.

Its subcellular location is the cytoplasm. Functionally, required for maturation of urease via the functional incorporation of the urease nickel metallocenter. The protein is Urease accessory protein UreF of Helicobacter pylori (strain ATCC 700392 / 26695) (Campylobacter pylori).